The following is a 473-amino-acid chain: Uronate isomerase (473 aa).

This sequence belongs to the metallo-dependent hydrolases superfamily. Uronate isomerase family.

The catalysed reaction is D-glucuronate = D-fructuronate. The enzyme catalyses aldehydo-D-galacturonate = keto-D-tagaturonate. The protein operates within carbohydrate metabolism; pentose and glucuronate interconversion. This Geobacillus stearothermophilus (Bacillus stearothermophilus) protein is Uronate isomerase (uxaC).